A 106-amino-acid chain; its full sequence is Follitropin subunit beta (106 aa).

Cystine bridges form between C1–C49, C15–C64, C18–C102, C26–C80, C30–C82, and C85–C92. N-linked (GlcNAc...) asparagine glycosylation is found at N5 and N22.

Belongs to the glycoprotein hormones subunit beta family. Heterodimer. The active follitropin is a heterodimer composed of an alpha chain/CGA shared with other hormones and a unique beta chain/FSHB shown here.

Its subcellular location is the secreted. In terms of biological role, together with the alpha chain CGA constitutes follitropin, the follicle-stimulating hormone, and provides its biological specificity to the hormone heterodimer. Binds FSHR, a G protein-coupled receptor, on target cells to activate downstream signaling pathways. Follitropin is involved in follicle development and spermatogenesis in reproductive organs. The sequence is that of Follitropin subunit beta (FSHB) from Struthio camelus (Common ostrich).